Reading from the N-terminus, the 403-residue chain is Putative queuine tRNA-ribosyltransferase (403 aa).

Asp91 functions as the Proton acceptor in the catalytic mechanism. Residues 91-95, Asp177, Gln218, and Gly245 contribute to the substrate site; that span reads DSGGF. The segment at 275–281 is RNA binding; it reads GIGAIED. Asp294 functions as the Nucleophile in the catalytic mechanism. Residues 299–303 form an RNA binding; important for wobble base 34 recognition region; that stretch reads ARWAR. Positions 341, 343, 346, and 372 each coordinate Zn(2+).

This sequence belongs to the queuine tRNA-ribosyltransferase family. In terms of assembly, homodimer. Within each dimer, one monomer is responsible for RNA recognition and catalysis, while the other monomer binds to the replacement base PreQ1. Zn(2+) serves as cofactor.

The catalysed reaction is 7-aminomethyl-7-carbaguanine + guanosine(34) in tRNA = 7-aminomethyl-7-carbaguanosine(34) in tRNA + guanine. Functionally, catalyzes the base-exchange of a guanine (G) residue with the queuine precursor 7-aminomethyl-7-deazaguanine (PreQ1) at position 34 (anticodon wobble position) in tRNAs with GU(N) anticodons (tRNA-Asp, -Asn, -His and -Tyr). Catalysis occurs through a double-displacement mechanism. The nucleophile active site attacks the C1' of nucleotide 34 to detach the guanine base from the RNA, forming a covalent enzyme-RNA intermediate. The proton acceptor active site deprotonates the incoming PreQ1, allowing a nucleophilic attack on the C1' of the ribose to form the product. After dissociation, two additional enzymatic reactions on the tRNA convert PreQ1 to queuine (Q), resulting in the hypermodified nucleoside queuosine (7-(((4,5-cis-dihydroxy-2-cyclopenten-1-yl)amino)methyl)-7-deazaguanosine). In Archaeoglobus fulgidus (strain ATCC 49558 / DSM 4304 / JCM 9628 / NBRC 100126 / VC-16), this protein is Putative queuine tRNA-ribosyltransferase.